The following is a 225-amino-acid chain: 7-cyano-7-deazaguanine synthase (225 aa).

7-17 is an ATP binding site; sequence LSGGMDSTTLL. Residues cysteine 183, cysteine 191, cysteine 194, and cysteine 197 each coordinate Zn(2+).

Belongs to the QueC family. Homodimer. Zn(2+) serves as cofactor.

The enzyme catalyses 7-carboxy-7-deazaguanine + NH4(+) + ATP = 7-cyano-7-deazaguanine + ADP + phosphate + H2O + H(+). It participates in purine metabolism; 7-cyano-7-deazaguanine biosynthesis. Its function is as follows. Catalyzes the ATP-dependent conversion of 7-carboxy-7-deazaguanine (CDG) to 7-cyano-7-deazaguanine (preQ(0)). In Caldicellulosiruptor saccharolyticus (strain ATCC 43494 / DSM 8903 / Tp8T 6331), this protein is 7-cyano-7-deazaguanine synthase.